The sequence spans 107 residues: Phosphoribosyl-ATP pyrophosphatase (107 aa).

It belongs to the PRA-PH family.

The protein resides in the cytoplasm. It carries out the reaction 1-(5-phospho-beta-D-ribosyl)-ATP + H2O = 1-(5-phospho-beta-D-ribosyl)-5'-AMP + diphosphate + H(+). Its pathway is amino-acid biosynthesis; L-histidine biosynthesis; L-histidine from 5-phospho-alpha-D-ribose 1-diphosphate: step 2/9. This Bacillus cereus (strain Q1) protein is Phosphoribosyl-ATP pyrophosphatase.